We begin with the raw amino-acid sequence, 95 residues long: Co-chaperonin GroES (95 aa).

This sequence belongs to the GroES chaperonin family. Heptamer of 7 subunits arranged in a ring. Interacts with the chaperonin GroEL.

Its subcellular location is the cytoplasm. Functionally, together with the chaperonin GroEL, plays an essential role in assisting protein folding. The GroEL-GroES system forms a nano-cage that allows encapsulation of the non-native substrate proteins and provides a physical environment optimized to promote and accelerate protein folding. GroES binds to the apical surface of the GroEL ring, thereby capping the opening of the GroEL channel. In Desulforapulum autotrophicum (strain ATCC 43914 / DSM 3382 / VKM B-1955 / HRM2) (Desulfobacterium autotrophicum), this protein is Co-chaperonin GroES.